A 74-amino-acid polypeptide reads, in one-letter code: Small ribosomal subunit protein bS18 (74 aa).

The protein belongs to the bacterial ribosomal protein bS18 family. As to quaternary structure, part of the 30S ribosomal subunit. Forms a tight heterodimer with protein bS6.

Binds as a heterodimer with protein bS6 to the central domain of the 16S rRNA, where it helps stabilize the platform of the 30S subunit. The chain is Small ribosomal subunit protein bS18 from Natranaerobius thermophilus (strain ATCC BAA-1301 / DSM 18059 / JW/NM-WN-LF).